Reading from the N-terminus, the 146-residue chain is Hemoglobin subunit beta (146 aa).

One can recognise a Globin domain in the interval 2–146 (QWSAEEKQLI…VAHALARKYH (145 aa)). Heme b contacts are provided by His63 and His92.

It belongs to the globin family. In terms of assembly, heterotetramer of two alpha chains and two beta chains. As to expression, red blood cells.

Functionally, involved in oxygen transport from the lung to the various peripheral tissues. The polypeptide is Hemoglobin subunit beta (HBB) (Struthio camelus (Common ostrich)).